Here is a 468-residue protein sequence, read N- to C-terminus: MSSGKIAQVVGPVVDVVFASGDKLPEINNALIVYKNGDKSQKVVLEVTLELGDGLVRTIAMESTDGLTRGLEVLDTGRAISVPVGKDTLGRVFNVLGDAIDLEEPFAEDAERQPIHKKAPSFDELSTSSEILETGIKVIDLLAPYLKGGKVGLFGGAGVGKTVLIQELIHNIAQEHGGISVFTGVGERTREGNDLYWEMKESGVIEKTAMVFGQMNEPPGARMRVALTGLTIAEYFRDVEGQDVLLFIDNIFRFTQAGSEVSALLGRMPSAVGYQPTLATEMGQLQERITSTKKGSVTSIQAIYVPADDYTDPAPATAFAHLDSTTNLERKLTQMGIYPAVDPLASSSRALTPEIVGDEHYEVATEVQRVLQRYRELQDIIAILGMDELSDEEKTLVGRARRIQFFLSQNFNVAETFTGQPGSYVPVEETVRGFKEILDGKHDQIPEDAFRMVGGIEDVIAKAEKMNY.

An ATP-binding site is contributed by G155 to T162.

This sequence belongs to the ATPase alpha/beta chains family. In terms of assembly, F-type ATPases have 2 components, CF(1) - the catalytic core - and CF(0) - the membrane proton channel. CF(1) has five subunits: alpha(3), beta(3), gamma(1), delta(1), epsilon(1). CF(0) has three main subunits: a(1), b(2) and c(9-12). The alpha and beta chains form an alternating ring which encloses part of the gamma chain. CF(1) is attached to CF(0) by a central stalk formed by the gamma and epsilon chains, while a peripheral stalk is formed by the delta and b chains.

Its subcellular location is the cell membrane. The enzyme catalyses ATP + H2O + 4 H(+)(in) = ADP + phosphate + 5 H(+)(out). Functionally, produces ATP from ADP in the presence of a proton gradient across the membrane. The catalytic sites are hosted primarily by the beta subunits. The chain is ATP synthase subunit beta from Streptococcus agalactiae serotype III (strain NEM316).